A 75-amino-acid chain; its full sequence is UPF0235 protein Mflv_3569 (75 aa).

This sequence belongs to the UPF0235 family.

The chain is UPF0235 protein Mflv_3569 from Mycolicibacterium gilvum (strain PYR-GCK) (Mycobacterium gilvum (strain PYR-GCK)).